The following is a 242-amino-acid chain: Segregation and condensation protein A (242 aa).

Belongs to the ScpA family. As to quaternary structure, component of a cohesin-like complex composed of ScpA, ScpB and the Smc homodimer, in which ScpA and ScpB bind to the head domain of Smc. The presence of the three proteins is required for the association of the complex with DNA.

Its subcellular location is the cytoplasm. Its function is as follows. Participates in chromosomal partition during cell division. May act via the formation of a condensin-like complex containing Smc and ScpB that pull DNA away from mid-cell into both cell halves. The sequence is that of Segregation and condensation protein A from Streptococcus pneumoniae (strain Taiwan19F-14).